Reading from the N-terminus, the 200-residue chain is Protein GrpE (200 aa).

The span at 1–25 (MMSKQNKKDWKKFKDEHKEEHKVEN) shows a compositional bias: basic and acidic residues. A disordered region spans residues 1-52 (MMSKQNKKDWKKFKDEHKEEHKVENEILEEETDEESQHQEPALGHPSYTALE).

The protein belongs to the GrpE family. As to quaternary structure, homodimer.

The protein resides in the cytoplasm. In terms of biological role, participates actively in the response to hyperosmotic and heat shock by preventing the aggregation of stress-denatured proteins, in association with DnaK and GrpE. It is the nucleotide exchange factor for DnaK and may function as a thermosensor. Unfolded proteins bind initially to DnaJ; upon interaction with the DnaJ-bound protein, DnaK hydrolyzes its bound ATP, resulting in the formation of a stable complex. GrpE releases ADP from DnaK; ATP binding to DnaK triggers the release of the substrate protein, thus completing the reaction cycle. Several rounds of ATP-dependent interactions between DnaJ, DnaK and GrpE are required for fully efficient folding. In Legionella pneumophila subsp. pneumophila (strain Philadelphia 1 / ATCC 33152 / DSM 7513), this protein is Protein GrpE.